A 277-amino-acid polypeptide reads, in one-letter code: Large ribosomal subunit protein uL2 (277 aa).

Residues 222 to 277 (GVTMNPVDHPHGGGEGRTSGGRNPVTPWGFPTKGKKTRNNKATDKFIVSSRHKRKK) form a disordered region.

This sequence belongs to the universal ribosomal protein uL2 family. Part of the 50S ribosomal subunit. Forms a bridge to the 30S subunit in the 70S ribosome.

Its function is as follows. One of the primary rRNA binding proteins. Required for association of the 30S and 50S subunits to form the 70S ribosome, for tRNA binding and peptide bond formation. It has been suggested to have peptidyltransferase activity; this is somewhat controversial. Makes several contacts with the 16S rRNA in the 70S ribosome. The polypeptide is Large ribosomal subunit protein uL2 (Xanthobacter autotrophicus (strain ATCC BAA-1158 / Py2)).